The sequence spans 312 residues: Lipid-translocating exporter-like protein RTA1 (312 aa).

The segment at 1–21 is disordered; the sequence is MSPESKKITAHGSTSMPLSRT. A compositionally biased stretch (polar residues) spans 11–21; the sequence is HGSTSMPLSRT. 6 consecutive transmembrane segments (helical) span residues 29 to 49, 61 to 81, 103 to 123, 142 to 162, 183 to 203, and 223 to 243; these read IPLT…FFLA, LSTM…YFIC, FITF…LLAG, AMIT…SFHV, FMMV…RSAY, and SLML…ILPI. Residues N258 and N304 are each glycosylated (N-linked (GlcNAc...) asparagine).

This sequence belongs to the lipid-translocating exporter (LTE) (TC 9.A.26.1) family.

Its subcellular location is the membrane. The protein operates within siderophore biosynthesis. In terms of biological role, lipid-translocating exporter-like protein; part of the gene cluster that mediates the biosynthesis of hydroxamate-containing siderophores that play a critical role in virulence via intracellular iron acquisition during macrophage infection. In Ajellomyces capsulatus (Darling's disease fungus), this protein is Lipid-translocating exporter-like protein RTA1.